Consider the following 499-residue polypeptide: MDALYKSTVAKFNEVTQLDCSTESFSIALSAIAGILLLLLLFRSKRHSSLKLPPGKLGIPFIGESFIFLRALRSNSLEQFFDERVKKFGLVFKTSLIGHPTVVLCGPAGNRLILSNEEKLVQMSWPAQFMKLMGENSVATRRGEDHIVMRSALAGFFGPGALQSYIGKMNTEIQSHINEKWKGKDEVNVLPLVRELVFNISAILFFNIYDKQEQDRLHKLLETILVGSFALPIDLPGFGFHRALQGRAKLNKIMLSLIKKRKEDLQSGSATATQDLLSVLLTFRDDKGTPLTNDEILDNFSSLLHASYDTTTSPMALIFKLLSSNPECYQKVVQEQLEILSNKEEGEEITWKDLKAMKYTWQVAQETLRMFPPVFGTFRKAITDIQYDGYTIPKGWKLLWTTYSTHPKDLYFNEPEKFMPSRFDQEGKHVAPYTFLPFGGGQRSCVGWEFSKMEILLFVHHFVKTFSSYTPVDPDEKISGDPLPPLPSKGFSIKLFPRP.

Residues 22-42 (TESFSIALSAIAGILLLLLLF) traverse the membrane as a helical; Signal-anchor segment. Heme is bound at residue cysteine 445.

This sequence belongs to the cytochrome P450 family. The cofactor is heme.

It is found in the membrane. It catalyses the reaction taxa-4(5),11(12)-diene + reduced [NADPH--hemoprotein reductase] + O2 = taxa-4(20),11-dien-5alpha-ol + oxidized [NADPH--hemoprotein reductase] + H2O + H(+). Its pathway is alkaloid biosynthesis; taxol biosynthesis; taxa-4(20),11-dien-5alpha-ol from geranylgeranyl diphosphate: step 2/2. In terms of biological role, catalyzes the first oxygenation step of taxol biosynthesis. Can use both taxa-4(5),11(12)-diene and taxa-4(20),11(12)-diene as substrate. This is Taxadiene 5-alpha hydroxylase from Taxus cuspidata (Japanese yew).